A 318-amino-acid chain; its full sequence is Fe(3+) dicitrate transport system permease protein FecD (318 aa).

Topologically, residues 1–2 (MK) are cytoplasmic. Residues 3-23 (IALVIFITLALAGCALLSLHM) traverse the membrane as a helical segment. Residues 24–55 (GVIPVPWRALLTDWQAGHEHYYVLMEYRLPRL) are Periplasmic-facing. Residues 56–76 (LLALFVGAALAVAGVLIQGIV) traverse the membrane as a helical segment. The Cytoplasmic segment spans residues 77–105 (RNPLASPDILGVNHAASLASVGALLLMPS). Residues 106-126 (LPVMVLPLLAFAGGMAGLILL) traverse the membrane as a helical segment. The Periplasmic segment spans residues 127–137 (KMLAKTHQPMK). Residues 138 to 158 (LALTGVALSACWASLTDYLML) traverse the membrane as a helical segment. The Cytoplasmic portion of the chain corresponds to 159–179 (SRPQDVNNALLWLTGSLWGRD). A helical membrane pass occupies residues 180 to 200 (WSFVKIAIPLMILFLPLSLSF). Topologically, residues 201–225 (CRDLDLLALGDARATTLGVSVPHTR) are periplasmic. Residues 226-246 (FWALLLAVAMTSTGVAACGPI) traverse the membrane as a helical segment. Residues 247–269 (SFIGLVVPHMMRSITGGRHRRLL) lie on the Cytoplasmic side of the membrane. A helical transmembrane segment spans residues 270–290 (PVSALTGALLLVVADLLARII). Over 291-294 (HPPL) the chain is Periplasmic. A helical membrane pass occupies residues 295–315 (ELPVGVLTAIIGAPWFVWLLV). Over 316–318 (RMR) the chain is Cytoplasmic.

This sequence belongs to the binding-protein-dependent transport system permease family. FecCD subfamily. In terms of assembly, the complex is composed of two ATP-binding proteins (FecE), two transmembrane proteins (FecC and FecD) and a solute-binding protein (FecB). Interacts with FecB.

It is found in the cell inner membrane. Functionally, part of the ABC transporter complex FecBCDE involved in citrate-dependent Fe(3+) uptake. Probably responsible for the translocation of the substrate across the membrane. The polypeptide is Fe(3+) dicitrate transport system permease protein FecD (Escherichia coli (strain K12)).